The sequence spans 324 residues: Protein translocase subunit SecF (324 aa).

Helical transmembrane passes span 16–36, 145–165, 174–194, 201–221, 247–269, and 276–295; these read FFWA…ASLV, LIRS…VYIW, LGSV…FALF, TTVA…VVVF, TLSR…LVFG, and FVFA…VYMA.

Belongs to the SecD/SecF family. SecF subfamily. In terms of assembly, forms a complex with SecD. Part of the essential Sec protein translocation apparatus which comprises SecA, SecYEG and auxiliary proteins SecDF-YajC and YidC.

The protein resides in the cell inner membrane. Its function is as follows. Part of the Sec protein translocase complex. Interacts with the SecYEG preprotein conducting channel. SecDF uses the proton motive force (PMF) to complete protein translocation after the ATP-dependent function of SecA. This is Protein translocase subunit SecF from Cereibacter sphaeroides (strain ATCC 17023 / DSM 158 / JCM 6121 / CCUG 31486 / LMG 2827 / NBRC 12203 / NCIMB 8253 / ATH 2.4.1.) (Rhodobacter sphaeroides).